Here is a 520-residue protein sequence, read N- to C-terminus: GMP synthase [glutamine-hydrolyzing] (520 aa).

A Glutamine amidotransferase type-1 domain is found at 12–205; it reads KIIVLDYGSQ…AISICGARGD (194 aa). Cys-89 (nucleophile) is an active-site residue. Residues His-179 and Glu-181 contribute to the active site. The GMPS ATP-PPase domain occupies 206–395; that stretch reads WSMDNFIDME…LGMPEEIVWR (190 aa). Position 233–239 (233–239) interacts with ATP; sequence SGGVDSS.

In terms of assembly, homodimer.

The catalysed reaction is XMP + L-glutamine + ATP + H2O = GMP + L-glutamate + AMP + diphosphate + 2 H(+). It functions in the pathway purine metabolism; GMP biosynthesis; GMP from XMP (L-Gln route): step 1/1. In terms of biological role, catalyzes the synthesis of GMP from XMP. The protein is GMP synthase [glutamine-hydrolyzing] of Streptococcus pyogenes serotype M3 (strain SSI-1).